The chain runs to 396 residues: Squamosa promoter-binding-like protein 10 (396 aa).

The tract at residues 74-104 is disordered; it reads QSTSINSSSPEDKRCNLASQSSPGDSSSNID. A compositionally biased stretch (polar residues) spans 90 to 104; it reads LASQSSPGDSSSNID. The segment at 173–250 adopts an SBP-type zinc-finger fold; that stretch reads VPRCQIDGCE…SHHNARRRKP (78 aa). Cys-176, Cys-181, Cys-198, His-201, Cys-217, Cys-220, His-224, and Cys-236 together coordinate Zn(2+). The Bipartite nuclear localization signal signature appears at 233–249; sequence KRSCRKRLSHHNARRRK.

The cofactor is Zn(2+).

The protein localises to the nucleus. In terms of biological role, trans-acting factor that binds specifically to the consensus nucleotide sequence 5'-TNCGTACAA-3'. The polypeptide is Squamosa promoter-binding-like protein 10 (SPL10) (Arabidopsis thaliana (Mouse-ear cress)).